Consider the following 243-residue polypeptide: Transmembrane protein 174 (243 aa).

The next 2 helical transmembrane spans lie at 40-60 (LLFS…MGWI) and 73-93 (LLGP…VCKF).

Interacts with SLC34A1; regulates SLC34A1 internalization by PTH and FGF23.

It is found in the endoplasmic reticulum membrane. It localises to the apical cell membrane. Functionally, regulator of plasma phosphate homeostasis. Decreases serum inorganic phosphate (Pi) uptake by regulating the sodium-phosphate cotransporter SLC34A1 trafficking by PTH and FGF23 in the kidney. This is Transmembrane protein 174 (TMEM174) from Pongo abelii (Sumatran orangutan).